A 104-amino-acid polypeptide reads, in one-letter code: MAAMIPGELLPEPGELELNAGRPVTTVLVANTGDRPVQVGSHFHFAEANAALRFDREAARGQRLDIAAGTAIRFEPGDERQVQLVPFSGARRVVGFNAQINGDL.

Belongs to the urease beta subunit family. As to quaternary structure, heterotrimer of UreA (gamma), UreB (beta) and UreC (alpha) subunits. Three heterotrimers associate to form the active enzyme.

The protein localises to the cytoplasm. The enzyme catalyses urea + 2 H2O + H(+) = hydrogencarbonate + 2 NH4(+). The protein operates within nitrogen metabolism; urea degradation; CO(2) and NH(3) from urea (urease route): step 1/1. This is Urease subunit beta from Synechococcus sp. (strain RCC307).